A 188-amino-acid polypeptide reads, in one-letter code: Elongation factor P (188 aa).

K34 is modified (N6-(3,6-diaminohexanoyl)-5-hydroxylysine).

This sequence belongs to the elongation factor P family. In terms of processing, may be beta-lysylated on the epsilon-amino group of Lys-34 by the combined action of EpmA and EpmB, and then hydroxylated on the C5 position of the same residue by EpmC (if this protein is present). Lysylation is critical for the stimulatory effect of EF-P on peptide-bond formation. The lysylation moiety may extend toward the peptidyltransferase center and stabilize the terminal 3-CCA end of the tRNA. Hydroxylation of the C5 position on Lys-34 may allow additional potential stabilizing hydrogen-bond interactions with the P-tRNA.

It is found in the cytoplasm. It functions in the pathway protein biosynthesis; polypeptide chain elongation. Functionally, involved in peptide bond synthesis. Alleviates ribosome stalling that occurs when 3 or more consecutive Pro residues or the sequence PPG is present in a protein, possibly by augmenting the peptidyl transferase activity of the ribosome. Modification of Lys-34 is required for alleviation. The polypeptide is Elongation factor P (Pectobacterium carotovorum subsp. carotovorum (strain PC1)).